The primary structure comprises 263 residues: Achaete-scute homolog 2 (263 aa).

2 disordered regions span residues 104 to 126 (RRRR…RNER) and 194 to 248 (PPSD…ELSP). 3 stretches are compositionally biased toward low complexity: residues 110–121 (ATEASSSSAAVA), 202–220 (PSAS…SPSP), and 230–247 (SPRS…GELS). A bHLH domain is found at 118–170 (AAVARRNERERNRVKLVNLGFQALRQHVPHGGANKKLSKVETLRSAVEYIRAL).

As to quaternary structure, efficient DNA binding requires dimerization with another basic helix-loop-helix (bHLH) protein. Forms heterodimers with bHLH transcription factor TCF3. May not heterodimerise with bHLH protein HAND1. Expressed in follicular T-helper (Tfh) cells.

It is found in the nucleus. Transcription factor. Binds to E-box motifs 5'-CANNTG-3' in the regulatory elements of target genes, probably as a heterodimer with another basic helix-loop-helix (bHLH) protein such as the transcription factor TCF3. May bind both open and closed chromatin, acting as a pioneer transcription factor to allow other factors to bind and activate lineage-specific genes. Required during post-implantation development for the generation of some differentiated trophoblast cell types. Transcriptional activity of ASCL2 may be antagonised in a subset of trophoblast cells by bHLH transcription factor HAND1, perhaps by competing for dimerization with other bHLH proteins. Involved in differentiation and function of follicular T-helper (Tfh) cells, thereby playing a role in germinal center responses; probably modulates expression of genes involved in Tfh cell function, such as BCL6. May also act as a suppressor of Th1-, Th2- and Th17-cell differentiation. Induces the formation of stem cells in intestinal crypts in vitro, synergistically activating transcription of target genes, such as SOX9, together with TCF4/beta-catenin. May form a bistable transcriptional switch, controlling expression of its own gene together with Wnt/R-spondin signaling, and thereby maintaining stem cell characteristics. Modulates expression of target genes, including perhaps down-regulating EGR1/Krox24 and chemokine CXCL10/Mob-1 and up-regulating CXCR4 and CDKN1C/p57kip2, in Schwann cells. May play a role in reducing proliferation of Schwann cells, perhaps acting via modulation of expression of CDKN1C. May be dispensable for blastocyst formation and later embryonic function. May be involved in the determination of neuronal precursors. The protein is Achaete-scute homolog 2 (Ascl2) of Mus musculus (Mouse).